Here is a 369-residue protein sequence, read N- to C-terminus: MDYQQLANQIKQWAIELGFEKVGICDVDLSEHEPALQAWLDAGYHGEMDWMARHGMMRARPAELLPGTLRVISARINYLPPQAQFASNLSDPNQAYISRYALGRDYHKLVRNQLKKLGEKIEQEVGKLGYRPFVDSAPILERPLAQKAGLGWTGKHSLILDKENGSWFFLGELLVDIPLPVDEPSENQCGKCTACITSCPTNAIVAEGVVDARRCVSYLTIEYSGVIPLEFRRAMGNRIYGCDDCQLVCPWNRFAPLTQQSDFHRRQSLNNADLVVLFEWDEATFLKNMEGSAIRRIGHQQWRRNLIIAMGNAPYSPRIIDTLQRHLGQSELLDEHIHWALEEQTQKTATPRQHARLIRIIEKGLPRDA.

The Proton donor role is filled by aspartate 135. One can recognise a 4Fe-4S ferredoxin-type domain in the interval 177 to 209; the sequence is IPLPVDEPSENQCGKCTACITSCPTNAIVAEGV. Residues cysteine 189, cysteine 192, cysteine 195, cysteine 199, cysteine 215, cysteine 242, cysteine 245, and cysteine 249 each contribute to the [4Fe-4S] cluster site.

Belongs to the QueG family. Monomer. Cob(II)alamin is required as a cofactor. Requires [4Fe-4S] cluster as cofactor.

The protein resides in the cytoplasm. The catalysed reaction is epoxyqueuosine(34) in tRNA + AH2 = queuosine(34) in tRNA + A + H2O. The protein operates within tRNA modification; tRNA-queuosine biosynthesis. Catalyzes the conversion of epoxyqueuosine (oQ) to queuosine (Q), which is a hypermodified base found in the wobble positions of tRNA(Asp), tRNA(Asn), tRNA(His) and tRNA(Tyr). The sequence is that of Epoxyqueuosine reductase from Vibrio cholerae serotype O1 (strain ATCC 39315 / El Tor Inaba N16961).